The sequence spans 429 residues: Ribosomal RNA small subunit methyltransferase B (429 aa).

S-adenosyl-L-methionine is bound by residues 254–260 (CAAPGGK), aspartate 277, aspartate 303, and aspartate 322. Cysteine 375 serves as the catalytic Nucleophile.

This sequence belongs to the class I-like SAM-binding methyltransferase superfamily. RsmB/NOP family.

It localises to the cytoplasm. The enzyme catalyses cytidine(967) in 16S rRNA + S-adenosyl-L-methionine = 5-methylcytidine(967) in 16S rRNA + S-adenosyl-L-homocysteine + H(+). In terms of biological role, specifically methylates the cytosine at position 967 (m5C967) of 16S rRNA. The sequence is that of Ribosomal RNA small subunit methyltransferase B from Pectobacterium atrosepticum (strain SCRI 1043 / ATCC BAA-672) (Erwinia carotovora subsp. atroseptica).